We begin with the raw amino-acid sequence, 388 residues long: Succinate--CoA ligase [ADP-forming] subunit beta (388 aa).

Residues 9–245 (KALLKKYGVS…KSQENERELK (237 aa)) form the ATP-grasp domain. Residues Lys46, 53-55 (GRG), Glu100, Tyr103, and Glu108 contribute to the ATP site. 2 residues coordinate Mg(2+): Asn200 and Asp214. Residues Asn265 and 322-324 (GIV) contribute to the substrate site.

The protein belongs to the succinate/malate CoA ligase beta subunit family. As to quaternary structure, heterotetramer of two alpha and two beta subunits. Mg(2+) is required as a cofactor.

It carries out the reaction succinate + ATP + CoA = succinyl-CoA + ADP + phosphate. The enzyme catalyses GTP + succinate + CoA = succinyl-CoA + GDP + phosphate. It participates in carbohydrate metabolism; tricarboxylic acid cycle; succinate from succinyl-CoA (ligase route): step 1/1. Succinyl-CoA synthetase functions in the citric acid cycle (TCA), coupling the hydrolysis of succinyl-CoA to the synthesis of either ATP or GTP and thus represents the only step of substrate-level phosphorylation in the TCA. The beta subunit provides nucleotide specificity of the enzyme and binds the substrate succinate, while the binding sites for coenzyme A and phosphate are found in the alpha subunit. The polypeptide is Succinate--CoA ligase [ADP-forming] subunit beta (Acinetobacter baylyi (strain ATCC 33305 / BD413 / ADP1)).